A 51-amino-acid polypeptide reads, in one-letter code: Cytochrome b559 subunit beta (51 aa).

The helical transmembrane segment at 26–42 (WLAVHALAVPTVFFIGS) threads the bilayer. Histidine 30 serves as a coordination point for heme.

This sequence belongs to the PsbE/PsbF family. Heterodimer of an alpha subunit and a beta subunit. PSII is composed of 1 copy each of membrane proteins PsbA, PsbB, PsbC, PsbD, PsbE, PsbF, PsbH, PsbI, PsbJ, PsbK, PsbL, PsbM, PsbT, PsbY, PsbZ, Psb30/Ycf12, at least 3 peripheral proteins of the oxygen-evolving complex and a large number of cofactors. It forms dimeric complexes. It depends on heme b as a cofactor.

It is found in the plastid. It localises to the chloroplast thylakoid membrane. This b-type cytochrome is tightly associated with the reaction center of photosystem II (PSII). PSII is a light-driven water:plastoquinone oxidoreductase that uses light energy to abstract electrons from H(2)O, generating O(2) and a proton gradient subsequently used for ATP formation. It consists of a core antenna complex that captures photons, and an electron transfer chain that converts photonic excitation into a charge separation. The chain is Cytochrome b559 subunit beta from Bigelowiella natans (Pedinomonas minutissima).